We begin with the raw amino-acid sequence, 208 residues long: Histone H1t (208 aa).

Positions 1 to 16 are enriched in low complexity; it reads MSETVPAASAGAVPAV. The tract at residues 1–40 is disordered; that stretch reads MSETVPAASAGAVPAVMEKPLTKKRGKKPAGLTSASRKAP. A Phosphoserine modification is found at Ser9. In terms of domain architecture, H15 spans 40 to 113; sequence PNLSVSKLIT…GASGSFKLSK (74 aa). Citrulline is present on Arg58. A disordered region spans residues 102-208; that stretch reads GTGASGSFKL…ANIRKATSRK (107 aa). Over residues 111-136 the composition is skewed to basic residues; sequence LSKKVLPKSTRRKANKSASAKTKKLV. At Ser143 the chain carries Phosphoserine. The span at 148–157 shows a compositional bias: basic residues; the sequence is KTNKRAKKPR. At Thr159 the chain carries Phosphothreonine. The segment covering 163–175 has biased composition (basic residues); the sequence is KAVRSGRKAKGAK. 2 positions are modified to phosphoserine: Ser167 and Ser182. Basic residues predominate over residues 187 to 208; the sequence is RATKPKLTQHHKANIRKATSRK.

The protein belongs to the histone H1/H5 family. In terms of processing, phosphorylated in early spermatids. Citrullination at Arg-58 (H1R54ci) by PADI4 takes place within the DNA-binding site of H1 and results in its displacement from chromatin and global chromatin decondensation, thereby promoting pluripotency and stem cell maintenance.

Functionally, testis-specific histone H1 that forms less compacted chromatin compared to other H1 histone subtypes. Formation of more relaxed chromatin may be required to promote chromatin architecture required for proper chromosome regulation during meiosis, such as homologous recombination. Histones H1 act as linkers that bind to nucleosomes and compact polynucleosomes into a higher-order chromatin configuration. The chain is Histone H1t from Macaca mulatta (Rhesus macaque).